Here is a 138-residue protein sequence, read N- to C-terminus: ATP synthase epsilon chain (138 aa).

The protein belongs to the ATPase epsilon chain family. As to quaternary structure, F-type ATPases have 2 components, CF(1) - the catalytic core - and CF(0) - the membrane proton channel. CF(1) has five subunits: alpha(3), beta(3), gamma(1), delta(1), epsilon(1). CF(0) has three main subunits: a, b and c.

The protein localises to the cell membrane. Functionally, produces ATP from ADP in the presence of a proton gradient across the membrane. This chain is ATP synthase epsilon chain, found in Streptococcus pyogenes serotype M3 (strain ATCC BAA-595 / MGAS315).